The sequence spans 841 residues: Copper-transporting P-type ATPase (841 aa).

The next 6 helical transmembrane spans lie at 186-206, 218-238, 256-276, 285-305, 445-465, and 474-494; these read LWVS…PMLG, ATFI…LPFF, IGLG…APGI, GAAV…VFVG, AVFV…WAAI, and GLLA…GLAT. The 4-aspartylphosphate intermediate role is filled by D530. Helical transmembrane passes span 602–622 and 638–658; these read GIAD…DLGI and GKTV…AVAD. 2 residues coordinate Mg(2+): D729 and D733. The next 2 helical transmembrane spans lie at 742–762 and 800–820; these read VGIA…ITLV and VAAG…IAAA.

The protein belongs to the cation transport ATPase (P-type) (TC 3.A.3) family. Type IB subfamily.

The protein localises to the cell membrane. The catalysed reaction is Cu(2+)(in) + ATP + H2O = Cu(2+)(out) + ADP + phosphate + H(+). In terms of biological role, involved in copper efflux. The chain is Copper-transporting P-type ATPase (actP) from Rhizobium leguminosarum bv. viciae.